The sequence spans 250 residues: Iron-sulfur assembly protein 1 (250 aa).

A disordered region spans residues 54–89; that stretch reads AADSVSPDSQRPGKKPFKFIVSNQSKSSKASKSPKW. Positions 75-89 are enriched in low complexity; the sequence is SNQSKSSKASKSPKW. Fe cation contacts are provided by cysteine 178, cysteine 242, and cysteine 244.

The protein belongs to the HesB/IscA family.

It localises to the mitochondrion matrix. Its function is as follows. Involved in the assembly of mitochondrial and cytoplasmic iron-sulfur proteins. Probably involved in the binding of an intermediate of Fe/S cluster assembly. In Saccharomyces cerevisiae (strain ATCC 204508 / S288c) (Baker's yeast), this protein is Iron-sulfur assembly protein 1 (ISA1).